The chain runs to 235 residues: Octanoyltransferase LIP2, mitochondrial (235 aa).

Residues 1-32 (MRSPRTLEVWKLGTVNYLKSLKLQEKLVSERK) constitute a mitochondrion transit peptide. The region spanning 34-218 (HQIPDTLLSL…CLAKAFSYDD (185 aa)) is the BPL/LPL catalytic domain. Residues 79–86 (RGGDITFH), 147–149 (AIG), and 160–162 (GLA) contribute to the substrate site. The Acyl-thioester intermediate role is filled by cysteine 178.

This sequence belongs to the LipB family. As to expression, expressed in leaves. Expressed in roots, rosette leaves, cauline leaves, stems and siliques.

It is found in the mitochondrion. It catalyses the reaction octanoyl-[ACP] + L-lysyl-[protein] = N(6)-octanoyl-L-lysyl-[protein] + holo-[ACP] + H(+). The protein operates within protein modification; protein lipoylation via endogenous pathway; protein N(6)-(lipoyl)lysine from octanoyl-[acyl-carrier-protein]: step 1/2. Catalyzes the transfer of endogenously produced octanoic acid from octanoyl-acyl-carrier-protein onto the lipoyl domains of lipoate-dependent enzymes. Lipoyl-ACP can also act as a substrate although octanoyl-ACP is likely to be the physiological substrate. Together with LIP1 is essential for mitochondrial protein lipoylation during seed development. Required for the lipoylation of mitochondrial 2-oxoglutarate dehydrogenase component E2 proteins in leaves and roots. This is Octanoyltransferase LIP2, mitochondrial from Arabidopsis thaliana (Mouse-ear cress).